A 539-amino-acid chain; its full sequence is Membrane protein insertase YidC (539 aa).

A helical membrane pass occupies residues 6-26 (VILAVALSFAVLLGWQFLFPP). The disordered stretch occupies residues 28–63 (PQQPAPAQQEQTAQPNQAVDSSVAGPVSNQLPDPAS). Low complexity predominate over residues 32–45 (APAQQEQTAQPNQA). A compositionally biased stretch (polar residues) spans 54 to 63 (VSNQLPDPAS). The next 3 helical transmembrane spans lie at 349–369 (YGIAIILLTIVIKILFWPLSH), 421–441 (MLLQIPVFFGLYKALMGTVAL), and 496–516 (IMMFLPLVFTFMFLNFPSGLV).

This sequence belongs to the OXA1/ALB3/YidC family. Type 1 subfamily. In terms of assembly, interacts with the Sec translocase complex via SecD. Specifically interacts with transmembrane segments of nascent integral membrane proteins during membrane integration.

It localises to the cell inner membrane. Required for the insertion and/or proper folding and/or complex formation of integral membrane proteins into the membrane. Involved in integration of membrane proteins that insert both dependently and independently of the Sec translocase complex, as well as at least some lipoproteins. Aids folding of multispanning membrane proteins. This Maridesulfovibrio salexigens (strain ATCC 14822 / DSM 2638 / NCIMB 8403 / VKM B-1763) (Desulfovibrio salexigens) protein is Membrane protein insertase YidC.